A 78-amino-acid chain; its full sequence is uncharacterized protein (78 aa).

The disordered stretch occupies residues 49 to 78 (QRASLERSNSIRNLQSQGKRRSDSKESRKL). Residues 54–65 (ERSNSIRNLQSQ) show a composition bias toward polar residues. Over residues 68-78 (RRSDSKESRKL) the composition is skewed to basic and acidic residues.

This is an uncharacterized protein from Saccharomyces cerevisiae (strain ATCC 204508 / S288c) (Baker's yeast).